Consider the following 295-residue polypeptide: Delta-1-pyrroline-5-carboxylate reductase apf3 (295 aa).

The protein belongs to the pyrroline-5-carboxylate reductase family.

The protein operates within secondary metabolite biosynthesis. Functionally, delta-1-pyrroline-5-carboxylate reductase; part of the gene cluster that mediates the biosynthesis of the cyclic tetrapeptide apicidin F (APF). The non-ribosomal peptide synthetase apf1 incorporates four different amino acids to produce apicidin F: L-phenylalanine, D-pipecolic acid (D-pip), N-methoxy-L-tryptophan and L-2-aminooctanedioic acid. L-Phenylalanine is the only proteinogenic amino acid directly used by apf1. The 3 other apf1 substrates are non-proteinogenic and have to be modified by other enzymes of the cluster. Lysine is converted to delta-1-pyrroline-5-carboxylate (P5C) which is reduced to L-pipecolic acid (L-pip) by apf3. L-pip is epimerized to D-pip, probably by apf1 activity, prior to incorporation. L-Tryptophan is N-oxidyzed by one of the cytochrome P450 monooxygenases (apf7 or apf8), and further methylated at the hydroxy group by the O-methyltransferase apf6 to yield N-methoxy-L-tryptophan. The synthesis of the fourth apf1 substrate is more complex. The fatty acid synthase apf5 is involved in the synthesis of the octanoic acid backbone of L-2-aminooctanedioic acid by fixing one acetyl-CoA unit and three malonyl-CoA units. Then one of the cytochrome P450 monooxygenases (apf7 or apf8) may oxidize this backbone to 2-oxooctanoic acid. The aminotransferase apf4 is predicted to catalyze the exchange of the keto group with an amino group. The next step would be the oxidation of 2-aminooctanoic acid by one of the cytochrome P450 monooxygenases (apf7 or apf8). The last step is the oxidation of 2-amino-8-hydroxyoctanoic acid to 2-aminooctanedioic acid is catalyzed by the FAD-dependent monooxygenase apf9. In Gibberella fujikuroi (strain CBS 195.34 / IMI 58289 / NRRL A-6831) (Bakanae and foot rot disease fungus), this protein is Delta-1-pyrroline-5-carboxylate reductase apf3.